The sequence spans 237 residues: Large ribosomal subunit protein uL1 (237 aa).

This sequence belongs to the universal ribosomal protein uL1 family. Part of the 50S ribosomal subunit.

Binds directly to 23S rRNA. The L1 stalk is quite mobile in the ribosome, and is involved in E site tRNA release. Its function is as follows. Protein L1 is also a translational repressor protein, it controls the translation of the L11 operon by binding to its mRNA. The protein is Large ribosomal subunit protein uL1 of Chloroflexus aggregans (strain MD-66 / DSM 9485).